The chain runs to 542 residues: uncharacterized protein (542 aa).

The span at 125–138 shows a compositional bias: low complexity; sequence ANSNSSSTGRDSTP. Disordered stretches follow at residues 125 to 182, 194 to 333, 390 to 428, and 459 to 487; these read ANSN…NHHN, LPPT…CSSS, SSST…YSSI, and SSSS…PSCN. Over residues 202–213 the composition is skewed to polar residues; that stretch reads QKPSFLSNSNQI. Low complexity-rich tracts occupy residues 228–306, 314–333, 390–423, and 459–479; these read SYTS…NSNN, NKLS…CSSS, SSST…TSTN, and SSSS…GGNS.

This is an uncharacterized protein from Dictyostelium discoideum (Social amoeba).